We begin with the raw amino-acid sequence, 434 residues long: uncharacterized protein (434 aa).

Residues 4-62 (LLTIHTQVEGEITALAFGGAGILRYHGFVIFVPFTAPGDQIICRIIEIKKSFAVAELVK) form the TRAM domain. [4Fe-4S] cluster contacts are provided by Cys75, Cys81, Cys84, and Cys161. S-adenosyl-L-methionine contacts are provided by Gln266, Tyr295, Glu316, and Asn364. The active-site Nucleophile is the Cys391.

Belongs to the class I-like SAM-binding methyltransferase superfamily. RNA M5U methyltransferase family.

This is an uncharacterized protein from Protochlamydia amoebophila (strain UWE25).